The primary structure comprises 488 residues: (S)-canadine synthase CYP719A21 (488 aa).

A helical membrane pass occupies residues 6-26 (LWILTLISTILAVFAAVLIIF). Cys432 is a binding site for heme.

Belongs to the cytochrome P450 family. It depends on heme as a cofactor.

Its subcellular location is the membrane. The catalysed reaction is (S)-tetrahydrocolumbamine + reduced [NADPH--hemoprotein reductase] + O2 = (S)-canadine + oxidized [NADPH--hemoprotein reductase] + 2 H2O + H(+). It participates in alkaloid biosynthesis. In terms of biological role, cytochrome P450 involved in the biosynthesis of the benzylisoquinoline alkaloid noscapine. Converts (S)-tetrahydrocolumbamine to (S)-canadine. This Papaver somniferum (Opium poppy) protein is (S)-canadine synthase CYP719A21.